The primary structure comprises 64 residues: Large ribosomal subunit protein bL32 (64 aa).

A disordered region spans residues 1-35 (MAVQKSRVTPSRRGQRRSHDALTAKQLSTDPTSGE).

Belongs to the bacterial ribosomal protein bL32 family.

The chain is Large ribosomal subunit protein bL32 from Xanthomonas axonopodis pv. citri (strain 306).